Here is a 149-residue protein sequence, read N- to C-terminus: uncharacterized protein (149 aa).

Residues 2-146 (LEVKTISVED…NHIVMYKTLR (145 aa)) form the N-acetyltransferase domain.

Belongs to the acetyltransferase family.

This is an uncharacterized protein from Bacillus subtilis (strain 168).